The sequence spans 149 residues: Inner membrane protein YfeZ (149 aa).

Residues 1-18 (MKSTEFHPVHYDAHGRLR) are Cytoplasmic-facing. The helical transmembrane segment at 19–39 (LPLLFWLVLLLQARTWVLFVI) threads the bilayer. The Periplasmic segment spans residues 40 to 58 (AGASREQGTALLNLFYPDH). A helical transmembrane segment spans residues 59–79 (DNFWLGLIPGIPAVLAFLLSG). Over 80 to 89 (RRATFPRTWR) the chain is Cytoplasmic. Residues 90–110 (VLYFLLLLAQVVLLCWQPWLW) form a helical membrane-spanning segment. The Periplasmic portion of the chain corresponds to 111–115 (LNGES). Residues 116-136 (VSGIGLALVVADIVALIWLLT) form a helical membrane-spanning segment. At 137–149 (NRRLRACFYEVKE) the chain is on the cytoplasmic side.

It is found in the cell inner membrane. The protein is Inner membrane protein YfeZ (yfeZ) of Escherichia coli (strain K12).